Consider the following 100-residue polypeptide: Small ribosomal subunit protein uS14c (100 aa).

Belongs to the universal ribosomal protein uS14 family. In terms of assembly, part of the 30S ribosomal subunit.

It is found in the plastid. Its function is as follows. Binds 16S rRNA, required for the assembly of 30S particles. In Cuscuta exaltata (Tall dodder), this protein is Small ribosomal subunit protein uS14c.